Here is a 240-residue protein sequence, read N- to C-terminus: MNAEKSPENHNVDHEEIAKFEAVASRWWDLEGEFKPLHRINPLRLGYIAERAGGLFGKKVLDVGCGGGILAESMAREGATVTGLDMGFEPLQVAKLHALESGIQVDYVQETVEEHAAKHAGQYDVVTCMEMLEHVPDPQSVVRACAQLVKPGGDVFFSTLNRNGKSWLMAVVGAEYILRMVPKGTHDVKKFIKPAELLGWVDQTSLKERHITGLHYNPITNTFKLGPGVDVNYMLHTQNK.

S-adenosyl-L-methionine contacts are provided by R44, G64, D85, and M129.

Belongs to the methyltransferase superfamily. UbiG/COQ3 family.

It carries out the reaction a 3-demethylubiquinol + S-adenosyl-L-methionine = a ubiquinol + S-adenosyl-L-homocysteine + H(+). The enzyme catalyses a 3-(all-trans-polyprenyl)benzene-1,2-diol + S-adenosyl-L-methionine = a 2-methoxy-6-(all-trans-polyprenyl)phenol + S-adenosyl-L-homocysteine + H(+). Its pathway is cofactor biosynthesis; ubiquinone biosynthesis. In terms of biological role, O-methyltransferase that catalyzes the 2 O-methylation steps in the ubiquinone biosynthetic pathway. This is Ubiquinone biosynthesis O-methyltransferase from Escherichia coli (strain ATCC 8739 / DSM 1576 / NBRC 3972 / NCIMB 8545 / WDCM 00012 / Crooks).